The following is a 101-amino-acid chain: Integration host factor subunit beta (101 aa).

The protein belongs to the bacterial histone-like protein family. As to quaternary structure, heterodimer of an alpha and a beta chain.

Functionally, this protein is one of the two subunits of integration host factor, a specific DNA-binding protein that functions in genetic recombination as well as in transcriptional and translational control. The protein is Integration host factor subunit beta of Nitrobacter hamburgensis (strain DSM 10229 / NCIMB 13809 / X14).